Consider the following 377-residue polypeptide: uncharacterized protein (377 aa).

Positions 345–377 are disordered; the sequence is VGPSPPAYEQVARSSPTDIPLPPPSCPTNVQRD.

This is an uncharacterized protein from Schizosaccharomyces pombe (strain 972 / ATCC 24843) (Fission yeast).